The sequence spans 294 residues: Sarcotoxin-2A (294 aa).

A signal peptide spans 1–22 (MKSFVFFAACMAIIALSSLVQA). The propeptide at 23–24 (YP) is removed by a dipeptidylpeptidase. Residue Gln25 is modified to Pyrrolidone carboxylic acid. Arg293 is modified (arginine amide).

The protein belongs to the attacin/sarcotoxin-2 family. In terms of tissue distribution, synthesized by the fat body and is eventually secreted into the hemolymph.

The protein localises to the secreted. Sarcotoxin II is an antibacterial protein which plays a role in the inflammatory response of this insect. The main effect of sarcotoxin II on E.coli may be the inhibition of cell wall synthesis, including septum formation. The protein is Sarcotoxin-2A of Sarcophaga peregrina (Flesh fly).